The chain runs to 264 residues: Proteasome subunit beta type-4 (264 aa).

Met-1 is modified (N-acetylmethionine). Positions 1-45 are excised as a propeptide; the sequence is MEAFLGSRSGLWAGGPAPGQFYRIPSTPDSFMDPASALYRGPITR. Position 26 is a phosphoserine (Ser-26). Phosphotyrosine is present on Tyr-102.

The protein belongs to the peptidase T1B family. As to quaternary structure, the 26S proteasome consists of a 20S proteasome core and two 19S regulatory subunits. The 20S proteasome core is a barrel-shaped complex made of 28 subunits that are arranged in four stacked rings. The two outer rings are each formed by seven alpha subunits, and the two inner rings are formed by seven beta subunits. The proteolytic activity is exerted by three beta-subunits PSMB5, PSMB6 and PSMB7. Forms a ternary complex with SMAD1 and OAZ1 before PSMB4 is incorporated into the 20S proteasome. Interacts with PRPF19. In terms of assembly, (Microbial infection) Interacts with HTLV-1 Tax protein. (Microbial infection) Interacts with HIV-1 Nef and Tat proteins.

It localises to the cytoplasm. It is found in the nucleus. Its function is as follows. Non-catalytic component of the 20S core proteasome complex involved in the proteolytic degradation of most intracellular proteins. This complex plays numerous essential roles within the cell by associating with different regulatory particles. Associated with two 19S regulatory particles, forms the 26S proteasome and thus participates in the ATP-dependent degradation of ubiquitinated proteins. The 26S proteasome plays a key role in the maintenance of protein homeostasis by removing misfolded or damaged proteins that could impair cellular functions, and by removing proteins whose functions are no longer required. Associated with the PA200 or PA28, the 20S proteasome mediates ubiquitin-independent protein degradation. This type of proteolysis is required in several pathways including spermatogenesis (20S-PA200 complex) or generation of a subset of MHC class I-presented antigenic peptides (20S-PA28 complex). SMAD1/OAZ1/PSMB4 complex mediates the degradation of the CREBBP/EP300 repressor SNIP1. This Homo sapiens (Human) protein is Proteasome subunit beta type-4.